Here is a 63-residue protein sequence, read N- to C-terminus: Conotoxin Cl14.11 (63 aa).

Residues 1 to 21 (MRFLLLLTVALLLTCIMETDA) form the signal peptide. The propeptide occupies 22 to 34 (EAKPEDLAERFRE).

Post-translationally, contains 2 disulfide bond. As to expression, expressed by the venom duct.

It localises to the secreted. The chain is Conotoxin Cl14.11 from Californiconus californicus (California cone).